A 387-amino-acid chain; its full sequence is Deoxyhypusine synthase (387 aa).

NAD(+) is bound by residues 108–112 (SNLIS), 134–136 (SAG), glutamate 140, and aspartate 257. 139–140 (EE) is a binding site for spermidine. Aspartate 262 contributes to the spermidine binding site. Glycine 304 lines the NAD(+) pocket. Histidine 309 serves as a coordination point for spermidine. 329–330 (TG) is a binding site for NAD(+). Residues 335–337 (GSD) and 344–350 (EAVSWGK) each bind spermidine. Catalysis depends on lysine 350, which acts as the Nucleophile. 363-364 (DV) provides a ligand contact to NAD(+).

This sequence belongs to the deoxyhypusine synthase family. In terms of assembly, homotetramer. It depends on NAD(+) as a cofactor.

The enzyme catalyses [eIF5A protein]-L-lysine + spermidine = [eIF5A protein]-deoxyhypusine + propane-1,3-diamine. It participates in protein modification; eIF5A hypusination. Catalyzes the NAD-dependent oxidative cleavage of spermidine and the subsequent transfer of the butylamine moiety of spermidine to the epsilon-amino group of a specific lysine residue of the eIF-5A precursor protein to form the intermediate deoxyhypusine residue. This Saccharomyces cerevisiae (strain ATCC 204508 / S288c) (Baker's yeast) protein is Deoxyhypusine synthase.